Reading from the N-terminus, the 141-residue chain is Putative antirestriction protein YubI (141 aa).

The protein belongs to the antirestriction protein family.

The chain is Putative antirestriction protein YubI (yubI) from Escherichia coli (strain K12).